Here is a 341-residue protein sequence, read N- to C-terminus: Eukaryotic translation initiation factor 3 subunit I (341 aa).

WD repeat units follow at residues 8 to 49 (GHER…GTYH), 50 to 91 (GHQG…HTWE), 145 to 184 (CDES…QLHS), 189 to 228 (DMGS…VLKT), and 286 to 325 (GHFG…FDFM).

Belongs to the eIF-3 subunit I family. As to quaternary structure, component of the eukaryotic translation initiation factor 3 (eIF-3) complex.

It localises to the cytoplasm. Component of the eukaryotic translation initiation factor 3 (eIF-3) complex, which is involved in protein synthesis of a specialized repertoire of mRNAs and, together with other initiation factors, stimulates binding of mRNA and methionyl-tRNAi to the 40S ribosome. The eIF-3 complex specifically targets and initiates translation of a subset of mRNAs involved in cell proliferation. This chain is Eukaryotic translation initiation factor 3 subunit I, found in Pyricularia oryzae (strain 70-15 / ATCC MYA-4617 / FGSC 8958) (Rice blast fungus).